The following is an 86-amino-acid chain: Large ribosomal subunit protein bL27 (86 aa).

Residues 1–26 form a disordered region; the sequence is MATKKAGGSSRNGRDSAGRRLGVKKS.

This sequence belongs to the bacterial ribosomal protein bL27 family.

This Rickettsia akari (strain Hartford) protein is Large ribosomal subunit protein bL27.